The following is a 262-amino-acid chain: Small ribosomal subunit protein eS4x (262 aa).

The S4 RNA-binding domain maps to 42 to 104 (LPLVLIIRNR…TNENFRLLYD (63 aa)).

It belongs to the eukaryotic ribosomal protein eS4 family.

The protein resides in the cytoplasm. This is Small ribosomal subunit protein eS4x (RPS4D) from Arabidopsis thaliana (Mouse-ear cress).